The chain runs to 49 residues: Large ribosomal subunit protein bL32 (49 aa).

The protein belongs to the bacterial ribosomal protein bL32 family.

In Helicobacter hepaticus (strain ATCC 51449 / 3B1), this protein is Large ribosomal subunit protein bL32.